We begin with the raw amino-acid sequence, 196 residues long: Dehydrogenase RED3 (196 aa).

6 residues coordinate NADP(+): serine 47, aspartate 74, asparagine 101, arginine 134, tyrosine 166, and lysine 170. The active-site Proton acceptor is the tyrosine 166. Lysine 170 serves as the catalytic Lowers pKa of active site Tyr.

Belongs to the short-chain dehydrogenases/reductases (SDR) family.

The catalysed reaction is a primary alcohol + NAD(+) = an aldehyde + NADH + H(+). It carries out the reaction a secondary alcohol + NAD(+) = a ketone + NADH + H(+). It participates in mycotoxin biosynthesis. In terms of biological role, dehydrogenase; part of the Tox1B locus, one of the 2 loci that mediate the biosynthesis of T-toxin, a family of linear polyketides 37 to 45 carbons in length, of which the major component is 41 carbons, and which leads to high virulence to maize. One of the PKSs (PKS1 or PKS2) could synthesize a precursor, used subsequently by the other PKS as starter unit, to add additional carbons. Variability in the length of the final carbon backbone C35-47 could be achieved by varying the number of condensation cycles, or use of different starter or extender units or might be due to decarboxylation of the penultimate product, catalyzed by DEC1. Additional proteins are required for the biosynthesis of T-toxin, including oxidoreductases RED1, RED2, RED3, LAM1 and OXI1, as well as esterase TOX9. In Cochliobolus heterostrophus (strain C4 / ATCC 48331 / race T) (Southern corn leaf blight fungus), this protein is Dehydrogenase RED3.